The primary structure comprises 229 residues: Potassium/proton antiporter CemA (229 aa).

3 helical membrane passes run 7–27 (FSPIFHLSFIVFLPWGIYLSF), 106–126 (MILRLSTNLICVVIISGFYIW), and 189–209 (IISGLVSTFPVILDTIFKYWI).

It belongs to the CemA family.

The protein localises to the plastid membrane. The enzyme catalyses K(+)(in) + H(+)(out) = K(+)(out) + H(+)(in). May be involved in proton extrusion. The polypeptide is Potassium/proton antiporter CemA (Cuscuta reflexa (Southern Asian dodder)).